Consider the following 731-residue polypeptide: Catalase-peroxidase (731 aa).

The interval 1–24 is disordered; it reads MSTEPNCPFSGNARKHTAAGAPSN. A cross-link (tryptophyl-tyrosyl-methioninium (Trp-Tyr) (with M-245)) is located at residues 96–219; the sequence is WHSAGTYRVS…LGAVQMGLIY (124 aa). The active-site Proton acceptor is the H97. Residues 219 to 245 constitute a cross-link (tryptophyl-tyrosyl-methioninium (Tyr-Met) (with W-96)); it reads YVNPEGPNGNPDPIAAARDIRETFARM. H260 is a binding site for heme b. The tract at residues 339-365 is disordered; that stretch reads GAQQWKPKGDAGAGTVPDAHDPSKRHA.

The protein belongs to the peroxidase family. Peroxidase/catalase subfamily. As to quaternary structure, homodimer or homotetramer. Heme b is required as a cofactor. Formation of the three residue Trp-Tyr-Met cross-link is important for the catalase, but not the peroxidase activity of the enzyme.

It carries out the reaction H2O2 + AH2 = A + 2 H2O. It catalyses the reaction 2 H2O2 = O2 + 2 H2O. Functionally, bifunctional enzyme with both catalase and broad-spectrum peroxidase activity. The polypeptide is Catalase-peroxidase (Polaromonas sp. (strain JS666 / ATCC BAA-500)).